The primary structure comprises 189 residues: Threonylcarbamoyl-AMP synthase (189 aa).

The YrdC-like domain occupies 9–189; sequence ASAQRKLSVY…IDGETGKRLR (181 aa).

This sequence belongs to the SUA5 family. TsaC subfamily.

The protein localises to the cytoplasm. The enzyme catalyses L-threonine + hydrogencarbonate + ATP = L-threonylcarbamoyladenylate + diphosphate + H2O. In terms of biological role, required for the formation of a threonylcarbamoyl group on adenosine at position 37 (t(6)A37) in tRNAs that read codons beginning with adenine. Catalyzes the conversion of L-threonine, HCO(3)(-)/CO(2) and ATP to give threonylcarbamoyl-AMP (TC-AMP) as the acyladenylate intermediate, with the release of diphosphate. This Neisseria gonorrhoeae (strain ATCC 700825 / FA 1090) protein is Threonylcarbamoyl-AMP synthase.